A 349-amino-acid polypeptide reads, in one-letter code: MNRKARRCLGHLFLSLGMVYLRIGGFSSVVALGASIICNKIPGLAPRQRAICQSRPDAIIVIGEGSQMGLDECQFQFRNGRWNCSALGERTVFGKELKVGSREAAFTYAIIAAGVAHAITAACTQGNLSDCGCDKEKQGQYHRDEGWKWGGCSADIRYGIGFAKVFVDAREIKQNARTLMNLHNNEAGRKILEENMKLECKCHGVSGSCTTKTCWTTLPQFRELGYVLKDKYNEAVHVEPVRASRNKRPTFLKIKKPLSYRKPMDTDLVYIEKSPNYCEEDPVTGSVGTQGRACNKTAPQASGCDLMCCGRGYNTHQYARVWQCNCKFHWCCYVKCNTCSERTEMYTCK.

An N-terminal signal peptide occupies residues M1–A31. Disulfide bonds link C73/C84, C123/C131, C133/C152, C200/C214, and C202/C209. 2 N-linked (GlcNAc...) asparagine glycosylation sites follow: N83 and N127. S206 is lipidated: O-palmitoleoyl serine; by PORCN. Positions V238–T266 are disordered linker. Intrachain disulfides connect C278-C309, C294-C304, C308-C348, C324-C339, C326-C336, and C331-C332. N295 carries N-linked (GlcNAc...) asparagine glycosylation.

It belongs to the Wnt family. In terms of assembly, forms a soluble 1:1 complex with AFM; this prevents oligomerization and is required for prolonged biological activity. The complex with AFM may represent the physiological form in body fluids. Interacts with PORCN. Interacts (via intrinsically disordered linker region) with RECK; interaction with RECK confers ligand selectivity for Wnt7 in brain endothelial cells and allows these cells to selectively respond to Wnt7. Interacts with FZD5. Palmitoleoylation is required for efficient binding to frizzled receptors. Depalmitoleoylation leads to Wnt signaling pathway inhibition.

It is found in the secreted. It localises to the extracellular space. Its subcellular location is the extracellular matrix. Ligand for members of the frizzled family of seven transmembrane receptors that functions in the canonical Wnt/beta-catenin signaling pathway. Plays an important role in embryonic development, including dorsal versus ventral patterning during limb development, skeleton development and urogenital tract development. Required for central nervous system (CNS) angiogenesis and blood-brain barrier regulation. Required for normal, sexually dimorphic development of the Mullerian ducts, and for normal fertility in both sexes. Required for normal neural stem cell proliferation in the hippocampus dentate gyrus. Required for normal progress through the cell cycle in neural progenitor cells, for self-renewal of neural stem cells, and for normal neuronal differentiation and maturation. Promotes formation of synapses via its interaction with FZD5. The chain is Protein Wnt-7a (WNT7A) from Pongo pygmaeus (Bornean orangutan).